The sequence spans 509 residues: Putative ATP-dependent RNA helicase QP509L (509 aa).

One can recognise a Helicase ATP-binding domain in the interval 110 to 262 (KKLLPPYGRF…KIIIHHLGQP (153 aa)). 123-130 (LNTGLGKT) lines the ATP pocket. Positions 215-218 (DEAH) match the DEAH box motif.

The protein belongs to the DEAD box helicase family. DEAH subfamily.

It catalyses the reaction ATP + H2O = ADP + phosphate + H(+). In African swine fever virus (isolate Tick/Malawi/Lil 20-1/1983) (ASFV), this protein is Putative ATP-dependent RNA helicase QP509L.